Reading from the N-terminus, the 360-residue chain is MQKFILLALSLALVLAITESFDFHEKELESEESLWGLYERWRSHHTVSRSLHEKQKRFNVFKHNAMHVHNANKMDKPYKLKLNKFADMTNHEFRNTYSGSKVKHHRMFRGGPRGNGTFMYEKVDTVPASVDWRKKGAVTSVKDQGQCGSCWAFSTIVAVEGINQIKTNKLVSLSEQELVDCDTDQNQGCNGGLMDYAFEFIKQRGGITTEANYPYEAYDGTCDVSKENAPAVSIDGHENVPENDENALLKAVANQPVSVAIDAGGSDFQFYSEGVFTGSCGTELDHGVAIVGYGTTIDGTKYWTVKNSWGPEWGEKGYIRMERGISDKEGLCGIAMEASYPIKKSSNNPSGIKSSPKDEL.

Residues 1–20 (MQKFILLALSLALVLAITES) form the signal peptide. A propeptide spans 21–124 (FDFHEKELES…NGTFMYEKVD (104 aa)) (activation peptide). A glycan (N-linked (GlcNAc...) asparagine) is linked at asparagine 115. 3 disulfide bridges follow: cysteine 147-cysteine 189, cysteine 181-cysteine 222, and cysteine 280-cysteine 332. Cysteine 150 is a catalytic residue. Catalysis depends on residues histidine 286 and asparagine 307. Residues 341-360 (PIKKSSNNPSGIKSSPKDEL) form a disordered region. Over residues 344–353 (KSSNNPSGIK) the composition is skewed to polar residues. Positions 354–360 (SSPKDEL) are cleaved as a propeptide — removed in mature form. A prevents secretion from ER region spans residues 357-360 (KDEL).

The protein belongs to the peptidase C1 family. The potential N-glycosylation site at Asn-115 is not glycosylated.

Its subcellular location is the cytoplasmic vesicle. With respect to regulation, low pH triggers activation of the protease and removal of the propeptide and the KDEL motif. Its function is as follows. Involved in programmed cell death. Shows a pronounced preference for hydrophobic residues in the P2 position and no obvious preference in the P1 position of the cleavage site. Accepts proline at the P1 and P1' positions. In Ricinus communis (Castor bean), this protein is Vignain (CYSEP).